The following is a 349-amino-acid chain: Ferredoxin--NADP reductase 1 (349 aa).

FAD contacts are provided by E36, K44, Y48, V88, L123, D290, and S331.

This sequence belongs to the ferredoxin--NADP reductase type 2 family. In terms of assembly, homodimer. FAD serves as cofactor.

The enzyme catalyses 2 reduced [2Fe-2S]-[ferredoxin] + NADP(+) + H(+) = 2 oxidized [2Fe-2S]-[ferredoxin] + NADPH. This is Ferredoxin--NADP reductase 1 from Bacillus licheniformis (strain ATCC 14580 / DSM 13 / JCM 2505 / CCUG 7422 / NBRC 12200 / NCIMB 9375 / NCTC 10341 / NRRL NRS-1264 / Gibson 46).